Consider the following 250-residue polypeptide: Small ribosomal subunit protein uS2 (250 aa).

It belongs to the universal ribosomal protein uS2 family.

The sequence is that of Small ribosomal subunit protein uS2 from Acidovorax ebreus (strain TPSY) (Diaphorobacter sp. (strain TPSY)).